The primary structure comprises 794 residues: uncharacterized protein (794 aa).

The N-terminal stretch at 1-22 (MKFKYGAIVFSGLLGVSAILAA) is a signal peptide. A lipid anchor (N-palmitoyl cysteine) is attached at cysteine 23. Cysteine 23 carries S-diacylglycerol cysteine lipidation. Composition is skewed to polar residues over residues 182 to 200 (TSVQ…NNGV) and 245 to 261 (QMST…DANQ). Disordered stretches follow at residues 182-208 (TSVQ…KIDK), 222-261 (NKAK…DANQ), 474-529 (FKIK…GKNG), 566-594 (SAAK…TEQK), and 737-757 (KNEK…RGKQ). Over residues 475–501 (KIKSSNKSKSSSSKSSTKAETGKTSGG) the composition is skewed to low complexity. Polar residues predominate over residues 511–526 (GAQNQGKKGEGAQNQG). Over residues 567 to 576 (AAKKEDKKSG) the composition is skewed to basic and acidic residues. Polar residues predominate over residues 577–593 (ESTTEQTQIQSKSVTEQ). The span at 737-751 (KNEKKEGSDQKDSKS) shows a compositional bias: basic and acidic residues.

It belongs to the MG185/MG260 family.

The protein resides in the cell membrane. This is an uncharacterized protein from Mycoplasma pneumoniae (strain ATCC 29342 / M129 / Subtype 1) (Mycoplasmoides pneumoniae).